The primary structure comprises 126 residues: Small ribosomal subunit protein uS13 (126 aa).

The segment at 99–126 (LRGQSTKNNARTRKGKKKTVANKKKATK) is disordered. Positions 108-126 (ARTRKGKKKTVANKKKATK) are enriched in basic residues.

Belongs to the universal ribosomal protein uS13 family. Part of the 30S ribosomal subunit. Forms a loose heterodimer with protein S19. Forms two bridges to the 50S subunit in the 70S ribosome.

In terms of biological role, located at the top of the head of the 30S subunit, it contacts several helices of the 16S rRNA. In the 70S ribosome it contacts the 23S rRNA (bridge B1a) and protein L5 of the 50S subunit (bridge B1b), connecting the 2 subunits; these bridges are implicated in subunit movement. Contacts the tRNAs in the A and P-sites. This is Small ribosomal subunit protein uS13 from Porphyromonas gingivalis (strain ATCC 33277 / DSM 20709 / CIP 103683 / JCM 12257 / NCTC 11834 / 2561).